The primary structure comprises 977 residues: Disks large-associated protein 3 (977 aa).

Residues 1 to 10 show a composition bias toward basic and acidic residues; it reads MRGYHGDRGS. Disordered stretches follow at residues 1–30, 52–90, 137–167, 181–289, 398–417, and 529–582; these read MRGYHGDRGSHPRPARFADQQHMDVGPAAR, AGLGHLSPEGPLSLSEGPSSVGPEGGPGGVGAGGSSSTF, FHTLPYQRGPAGPGPGPGSGAAPEARSESPS, AKSH…CLDA, AMGDEESGDSDGSPKTSPKA, and PGSS…SADG. The segment covering 53 to 73 has biased composition (low complexity); sequence GLGHLSPEGPLSLSEGPSSVG. Ser-58 bears the Phosphoserine mark. The span at 74 to 85 shows a compositional bias: gly residues; the sequence is PEGGPGGVGAGG. Residues 189 to 201 are compositionally biased toward basic and acidic residues; it reads PGKRDYNGPKAEG. A compositionally biased stretch (low complexity) spans 202-212; sequence RSSSGGDSYSG. Basic residues predominate over residues 221-245; the sequence is SHHHHHHHHHHHHQSRHGKRSKSKD. Over residues 258 to 271 the composition is skewed to low complexity; that stretch reads GWWSSDDNLDSDSG. Ser-404, Ser-407, Ser-410, and Ser-414 each carry phosphoserine. The span at 538-547 shows a compositional bias: pro residues; the sequence is APPPIPPGSQ. A phosphoserine mark is found at Ser-641 and Ser-643. Disordered regions lie at residues 739-788 and 906-939; these read EGYP…RTSP and EEKKVPPPIPKKPSRGRGVPVKERSLDSVDRQRQ. The segment covering 754 to 763 has biased composition (pro residues); that stretch reads PGPPPVPAPG. 2 stretches are compositionally biased toward basic and acidic residues: residues 767-777 and 925-939; these read GRRDSWMERGS and PVKERSLDSVDRQRQ. 3 positions are modified to phosphoserine: Ser-930, Ser-933, and Ser-965.

Belongs to the SAPAP family. Interacts with DLG1 and DLG4/PSD-95. In terms of tissue distribution, expressed in most brain regions.

It localises to the cell membrane. The protein resides in the postsynaptic density. It is found in the synapse. Its function is as follows. May play a role in the molecular organization of synapses and neuronal cell signaling. Could be an adapter protein linking ion channel to the subsynaptic cytoskeleton. May induce enrichment of PSD-95/SAP90 at the plasma membrane. The polypeptide is Disks large-associated protein 3 (Dlgap3) (Rattus norvegicus (Rat)).